A 336-amino-acid polypeptide reads, in one-letter code: Dihydroorotate dehydrogenase (quinone) (336 aa).

Residues 62–66 and Thr-86 each bind FMN; that span reads AGLDK. Substrate is bound at residue Lys-66. Residue 111 to 115 participates in substrate binding; that stretch reads NRMGF. FMN-binding residues include Asn-139 and Asn-172. Asn-172 contributes to the substrate binding site. Ser-175 (nucleophile) is an active-site residue. Residue Asn-177 coordinates substrate. FMN-binding residues include Lys-217 and Thr-245. 246 to 247 contributes to the substrate binding site; the sequence is NT. Residues Gly-268, Gly-297, and 318–319 contribute to the FMN site; that span reads YS.

Belongs to the dihydroorotate dehydrogenase family. Type 2 subfamily. In terms of assembly, monomer. It depends on FMN as a cofactor.

The protein resides in the cell membrane. It carries out the reaction (S)-dihydroorotate + a quinone = orotate + a quinol. It participates in pyrimidine metabolism; UMP biosynthesis via de novo pathway; orotate from (S)-dihydroorotate (quinone route): step 1/1. Functionally, catalyzes the conversion of dihydroorotate to orotate with quinone as electron acceptor. This is Dihydroorotate dehydrogenase (quinone) from Salmonella typhi.